A 222-amino-acid chain; its full sequence is MPKQVKGLLGEKLGMTQVFDESGRVIPVTVVRAGPCVVTQVRTPDRDGYSAVQLGYGAVDPRRVNKPLAGHFRAAGVTPRRYLAEVRTGDAAEYTVGQEVTVEIFTPGQRVDVAGVSKGKGFAGLMKRHNFRGLPDSHGTERKHRSPGSIGACATPGRVFKGLRMAGRMGGRRVTVQNLAVQAVKPEENLLLLQGAVPGPNGGLVYVRTAAKGKANRDGGAA.

The disordered stretch occupies residues 129-150 (HNFRGLPDSHGTERKHRSPGSI).

Belongs to the universal ribosomal protein uL3 family. Part of the 50S ribosomal subunit. Forms a cluster with proteins L14 and L19.

Its function is as follows. One of the primary rRNA binding proteins, it binds directly near the 3'-end of the 23S rRNA, where it nucleates assembly of the 50S subunit. In Acidothermus cellulolyticus (strain ATCC 43068 / DSM 8971 / 11B), this protein is Large ribosomal subunit protein uL3.